Reading from the N-terminus, the 354-residue chain is Alkanal monooxygenase alpha chain (354 aa).

Belongs to the bacterial luciferase oxidoreductase family. In terms of assembly, heterodimer of an alpha and a beta chain.

It catalyses the reaction a long-chain fatty aldehyde + FMNH2 + O2 = a long-chain fatty acid + hnu + FMN + H2O + 2 H(+). Functionally, light-emitting reaction in luminous bacteria. This is Alkanal monooxygenase alpha chain (luxA) from Photobacterium leiognathi.